The primary structure comprises 548 residues: Glucose-6-phosphate isomerase (548 aa).

The active-site Proton donor is the E355. Residues H386 and K514 contribute to the active site.

It belongs to the GPI family.

It is found in the cytoplasm. It carries out the reaction alpha-D-glucose 6-phosphate = beta-D-fructose 6-phosphate. It participates in carbohydrate biosynthesis; gluconeogenesis. Its pathway is carbohydrate degradation; glycolysis; D-glyceraldehyde 3-phosphate and glycerone phosphate from D-glucose: step 2/4. Its function is as follows. Catalyzes the reversible isomerization of glucose-6-phosphate to fructose-6-phosphate. This chain is Glucose-6-phosphate isomerase, found in Photorhabdus laumondii subsp. laumondii (strain DSM 15139 / CIP 105565 / TT01) (Photorhabdus luminescens subsp. laumondii).